A 596-amino-acid polypeptide reads, in one-letter code: Elongation factor 4 (596 aa).

Residues 2–183 (KNIRNFSIIA…AIVRRVPAPD (182 aa)) enclose the tr-type G domain. GTP is bound by residues 14 to 19 (DHGKST) and 130 to 133 (NKID).

This sequence belongs to the TRAFAC class translation factor GTPase superfamily. Classic translation factor GTPase family. LepA subfamily.

The protein resides in the cell inner membrane. The enzyme catalyses GTP + H2O = GDP + phosphate + H(+). Required for accurate and efficient protein synthesis under certain stress conditions. May act as a fidelity factor of the translation reaction, by catalyzing a one-codon backward translocation of tRNAs on improperly translocated ribosomes. Back-translocation proceeds from a post-translocation (POST) complex to a pre-translocation (PRE) complex, thus giving elongation factor G a second chance to translocate the tRNAs correctly. Binds to ribosomes in a GTP-dependent manner. The sequence is that of Elongation factor 4 from Campylobacter curvus (strain 525.92).